Here is a 340-residue protein sequence, read N- to C-terminus: Peroxisomal adenine nucleotide transporter 1 (340 aa).

3 Solcar repeats span residues 4-119 (ENAV…VRKH), 133-218 (FSTP…LREA), and 236-320 (LSPG…LTKM). Transmembrane regions (helical) follow at residues 6-26 (AVIG…LDLA), 96-116 (GSST…YTLV), 139-159 (LVLG…INVV), 190-210 (GFWA…ITYA), 242-262 (FVMG…LIIA), and 293-313 (WKGL…LFMF).

This sequence belongs to the mitochondrial carrier (TC 2.A.29) family.

It is found in the peroxisome membrane. In terms of biological role, adenine nucleotide transporter involved in the uniport of ATP and adenine nucleotide hetero-exchange transport between the cytosol and the peroxisomal lumen. This transport is accompanied by a proton transport from the peroxisomal lumen to the cytosol. Transport of ATP into the peroxisome is required for beta-oxidation of medium-chain fatty acids. The polypeptide is Peroxisomal adenine nucleotide transporter 1 (ANT1) (Eremothecium gossypii (strain ATCC 10895 / CBS 109.51 / FGSC 9923 / NRRL Y-1056) (Yeast)).